Consider the following 82-residue polypeptide: Protein C2 (82 aa).

The protein is Protein C2 (C2) of Sterkiella nova (Ciliate).